Here is a 202-residue protein sequence, read N- to C-terminus: Putative 3-methyladenine DNA glycosylase (202 aa).

Belongs to the DNA glycosylase MPG family.

The protein is Putative 3-methyladenine DNA glycosylase of Alkaliphilus oremlandii (strain OhILAs) (Clostridium oremlandii (strain OhILAs)).